Consider the following 745-residue polypeptide: Junction plakoglobin (745 aa).

An N-acetylmethionine modification is found at Met-1. Thr-14 carries an O-linked (GlcNAc) threonine glycan. Residues Ser-99 and Ser-125 each carry the phosphoserine modification. ARM repeat units lie at residues 132-171 (NYQD…QLSK), 172-215 (KEAS…LSHH), 216-255 (REGL…NLLL), 258-297 (EGAK…LLAY), 298-341 (GNQE…LSVC), 342-381 (PSNK…NLSD), 383-420 (ATKQ…NLTC), 423-464 (SKNK…HLTS), 470-510 (EMAQ…NLAL), 512-551 (PANH…QPYT), 574-613 (PMNR…ELAQ), and 615-661 (KEAA…PDYR). Residues 132–297 (NYQDDAELAT…TTDCLQLLAY (166 aa)) form an interaction with DSC1 and DSG1 region. Position 182 is a phosphoserine (Ser-182). The tract at residues 574-661 (PMNRMEIFRL…ISEDKNPDYR (88 aa)) is interaction with DSC1. Phosphoserine occurs at positions 665 and 730.

Belongs to the beta-catenin family. Homodimer. Component of an E-cadherin/catenin adhesion complex composed of at least E-cadherin/CDH1 and gamma-catenin/JUP, and possibly alpha-catenin/CTNNA1; the complex is located to adherens junctions. The stable association of CTNNA1 is controversial as CTNNA1 was shown not to bind to F-actin when assembled in the complex. Interacts with MUC1. Interacts with CAV1. Interacts with PTPRJ. Interacts with DSG1. Interacts with DSC1 and DSC2. Interacts with PKP2. Interacts with PKP3 (via N-terminus); the interaction is required for PKP3 localization to desmosome cell-cell junctions. Interacts with DSG4. May be phosphorylated by FER. Expressed in the mammary epithelium (at protein level).

It is found in the cell junction. It localises to the adherens junction. The protein localises to the desmosome. Its subcellular location is the cytoplasm. The protein resides in the cytoskeleton. It is found in the cell membrane. It localises to the nucleus. Its function is as follows. Common junctional plaque protein. The membrane-associated plaques are architectural elements in an important strategic position to influence the arrangement and function of both the cytoskeleton and the cells within the tissue. The presence of plakoglobin in both the desmosomes and in the intermediate junctions suggests that it plays a central role in the structure and function of submembranous plaques. Acts as a substrate for VE-PTP and is required by it to stimulate VE-cadherin function in endothelial cells. Can replace beta-catenin in E-cadherin/catenin adhesion complexes which are proposed to couple cadherins to the actin cytoskeleton. The protein is Junction plakoglobin of Mus musculus (Mouse).